The sequence spans 373 residues: L-threonine 3-dehydrogenase, mitochondrial (373 aa).

Residues Gly-62–Leu-67, Asp-88–Arg-90, Asp-106–Ile-107, Tyr-195, Lys-199, and Ile-225 each bind NAD(+). Tyr-195 functions as the Proton donor/acceptor in the catalytic mechanism.

It belongs to the NAD(P)-dependent epimerase/dehydratase family. Homodimer.

Its subcellular location is the mitochondrion. It catalyses the reaction L-threonine + NAD(+) = (2S)-2-amino-3-oxobutanoate + NADH + H(+). The protein operates within amino-acid degradation; L-threonine degradation via oxydo-reductase pathway; glycine from L-threonine: step 1/2. Catalyzes the NAD(+)-dependent oxidation of L-threonine to 2-amino-3-ketobutyrate, mediating L-threonine catabolism. The polypeptide is L-threonine 3-dehydrogenase, mitochondrial (Bos taurus (Bovine)).